The chain runs to 205 residues: Rho-related protein racI (205 aa).

A GTP-binding site is contributed by 12–19; sequence GDSKTGKT. Positions 34–42 match the Effector region motif; it reads YVPSHVDAT. GTP-binding positions include 59–63 and 119–122; these read DSSAL and TKCD. Residue Cys202 is modified to Cysteine methyl ester. Cys202 carries S-geranylgeranyl cysteine lipidation. A propeptide spans 203 to 205 (removed in mature form); that stretch reads IIQ.

Belongs to the small GTPase superfamily. Rho family.

It localises to the cell membrane. This is Rho-related protein racI (racI) from Dictyostelium discoideum (Social amoeba).